A 413-amino-acid polypeptide reads, in one-letter code: Protein trichome birefringence-like 31 (413 aa).

The helical; Signal-anchor for type II membrane protein transmembrane segment at 12-34 (IQSIFQVVLVSLLVLGSVRWILD) threads the bilayer. Positions 141–143 (GDS) match the GDS motif motif. Positions 384–398 (DCIHWCLPGVPDTWN) match the DCXHWCLPGXXDXWN motif motif.

This sequence belongs to the PC-esterase family. TBL subfamily.

It is found in the membrane. In terms of biological role, may act as a bridging protein that binds pectin and other cell wall polysaccharides. Probably involved in maintaining esterification of pectins. May be involved in the specific O-acetylation of cell wall polymers. The chain is Protein trichome birefringence-like 31 (TBL31) from Arabidopsis thaliana (Mouse-ear cress).